A 274-amino-acid chain; its full sequence is Tryptophan synthase alpha chain (274 aa).

Residues E49 and D60 each act as proton acceptor in the active site.

Belongs to the TrpA family. Tetramer of two alpha and two beta chains.

It carries out the reaction (1S,2R)-1-C-(indol-3-yl)glycerol 3-phosphate + L-serine = D-glyceraldehyde 3-phosphate + L-tryptophan + H2O. Its pathway is amino-acid biosynthesis; L-tryptophan biosynthesis; L-tryptophan from chorismate: step 5/5. In terms of biological role, the alpha subunit is responsible for the aldol cleavage of indoleglycerol phosphate to indole and glyceraldehyde 3-phosphate. This Zymomonas mobilis subsp. mobilis (strain ATCC 31821 / ZM4 / CP4) protein is Tryptophan synthase alpha chain.